A 488-amino-acid chain; its full sequence is Acetyl-coenzyme A carboxylase carboxyl transferase subunit beta, chloroplastic (488 aa).

The 265-residue stretch at 224-488 (LWIQCDNCYG…FFPLNKNEIK (265 aa)) folds into the CoA carboxyltransferase N-terminal domain. Positions 228, 231, 244, and 247 each coordinate Zn(2+). The C4-type zinc-finger motif lies at 228 to 247 (CDNCYGLMYKKVEMNVCEEC).

This sequence belongs to the AccD/PCCB family. In terms of assembly, acetyl-CoA carboxylase is a heterohexamer composed of biotin carboxyl carrier protein, biotin carboxylase and 2 subunits each of ACCase subunit alpha and ACCase plastid-coded subunit beta (accD). Zn(2+) serves as cofactor.

It is found in the plastid. Its subcellular location is the chloroplast stroma. It carries out the reaction N(6)-carboxybiotinyl-L-lysyl-[protein] + acetyl-CoA = N(6)-biotinyl-L-lysyl-[protein] + malonyl-CoA. Its pathway is lipid metabolism; malonyl-CoA biosynthesis; malonyl-CoA from acetyl-CoA: step 1/1. Component of the acetyl coenzyme A carboxylase (ACC) complex. Biotin carboxylase (BC) catalyzes the carboxylation of biotin on its carrier protein (BCCP) and then the CO(2) group is transferred by the transcarboxylase to acetyl-CoA to form malonyl-CoA. This chain is Acetyl-coenzyme A carboxylase carboxyl transferase subunit beta, chloroplastic, found in Arabis hirsuta (Hairy rock-cress).